Reading from the N-terminus, the 724-residue chain is MNRNPRMSKFQPNPRSRSRFQDETDLRSLRSFKTDFSNYLASDTNFLNVAEIMTSYAYGESNNAHEKEIQCDLLTENGGIEIDPTRLSYRERIRWHLQQFCYKTSSHGIPMLGQAPNSLYRAAWVFLLLICAIQFINQAVAVIQKYQKMDKITDIQLKFDTAPFPAITLCNLNPYKDSVIRSHDSISKILGVFKSVMKKAGDSSSEALEEEEETEYDMNGITIQAKRKKRGAGEKGTFEPANSACECDEEDGSNECEERSTEKPSGDNDMCICAFDRQTNDAWPCHRKEQWTNTTCQTCDEHYLCSKKAKKGTKRSELKKEPCICESKGLFCIKHEHAAMVLNLWEYFGDSEDFSEISTEEREALGFGNMTDEVAIVTKAKENIIFAMSALSEEQRILMSQAKHNLIHKCSFNGKPCDIDQDFELVADPTFGNCFVFNHDREIFKSSVRAGPQYGLRVMLFVNASDYLPTSEAVGIRLTIHDKDDFPFPDTFGYSAPTGYISSFGMRMKKMSRLPAPYGDCVEDGATSNYIYKGYAYSTEGCYRTCFQELIIDRCGCSDPRFPSIGGVQPCQVFNKNHRECLEKHTHQIGEIHGSFKCRCQQPCNQTIYTTSYSEAIWPSQALNISLGQCEKEAEECNEEYKENAAMLEVFYEALNFEVLSESEAYGIVKMMADFGGHLGLWSGVSVMTCCEFVCLAFELIYMAIAHHINQQRIRRRENAANEY.

Residues 1–15 are compositionally biased toward polar residues; sequence MNRNPRMSKFQPNPR. The interval 1 to 22 is disordered; that stretch reads MNRNPRMSKFQPNPRSRSRFQD. Over 1-122 the chain is Cytoplasmic; it reads MNRNPRMSKF…GQAPNSLYRA (122 aa). A helical membrane pass occupies residues 123–143; it reads AWVFLLLICAIQFINQAVAVI. Topologically, residues 144–684 are extracellular; the sequence is QKYQKMDKIT…FGGHLGLWSG (541 aa). Residues 229-265 are disordered; the sequence is KRGAGEKGTFEPANSACECDEEDGSNECEERSTEKPS. Acidic residues predominate over residues 246–255; that stretch reads ECDEEDGSNE. The span at 256–265 shows a compositional bias: basic and acidic residues; the sequence is CEERSTEKPS. 5 N-linked (GlcNAc...) asparagine glycosylation sites follow: asparagine 293, asparagine 369, asparagine 463, asparagine 605, and asparagine 624. A helical transmembrane segment spans residues 685-705; it reads VSVMTCCEFVCLAFELIYMAI. Over 706–724 the chain is Cytoplasmic; that stretch reads AHHINQQRIRRRENAANEY.

This sequence belongs to the amiloride-sensitive sodium channel (TC 1.A.6) family. In terms of assembly, component of a non-voltage-gated amiloride-sensitive cation channel complex (also called the degenerin channel complex) composed of at least the mec-2, mec-4, mec-6 and mec-10 subunits; the complex mediates mechanotransduction in touch cells. Interacts with mec-4 and mec-6.

The protein localises to the cell membrane. Functionally, subunit of an amiloride-sensitive cation channel (degenerin channel complex) permeable for sodium, potassium, lithium and N-methylglucamine, and required for mechanosensory transduction (touch sensitivity). Negatively regulates the turning step of male mating behavior. The polypeptide is Degenerin mec-10 (Caenorhabditis elegans).